A 240-amino-acid polypeptide reads, in one-letter code: Pyridoxine 5'-phosphate synthase (240 aa).

Residue N7 participates in 3-amino-2-oxopropyl phosphate binding. 9 to 10 (DH) is a binding site for 1-deoxy-D-xylulose 5-phosphate. R18 provides a ligand contact to 3-amino-2-oxopropyl phosphate. Catalysis depends on H43, which acts as the Proton acceptor. 1-deoxy-D-xylulose 5-phosphate contacts are provided by R45 and H50. Catalysis depends on E70, which acts as the Proton acceptor. Residue T100 participates in 1-deoxy-D-xylulose 5-phosphate binding. The Proton donor role is filled by H191. 3-amino-2-oxopropyl phosphate contacts are provided by residues G192 and 213-214 (GH).

It belongs to the PNP synthase family. In terms of assembly, homooctamer; tetramer of dimers.

The protein localises to the cytoplasm. It carries out the reaction 3-amino-2-oxopropyl phosphate + 1-deoxy-D-xylulose 5-phosphate = pyridoxine 5'-phosphate + phosphate + 2 H2O + H(+). The protein operates within cofactor biosynthesis; pyridoxine 5'-phosphate biosynthesis; pyridoxine 5'-phosphate from D-erythrose 4-phosphate: step 5/5. In terms of biological role, catalyzes the complicated ring closure reaction between the two acyclic compounds 1-deoxy-D-xylulose-5-phosphate (DXP) and 3-amino-2-oxopropyl phosphate (1-amino-acetone-3-phosphate or AAP) to form pyridoxine 5'-phosphate (PNP) and inorganic phosphate. In Coxiella burnetii (strain Dugway 5J108-111), this protein is Pyridoxine 5'-phosphate synthase.